Reading from the N-terminus, the 261-residue chain is tRNA pseudouridine synthase A (261 aa).

Catalysis depends on Asp-51, which acts as the Nucleophile. Position 109 (Tyr-109) interacts with substrate.

Belongs to the tRNA pseudouridine synthase TruA family. In terms of assembly, homodimer.

The enzyme catalyses uridine(38/39/40) in tRNA = pseudouridine(38/39/40) in tRNA. Its function is as follows. Formation of pseudouridine at positions 38, 39 and 40 in the anticodon stem and loop of transfer RNAs. In Shewanella sediminis (strain HAW-EB3), this protein is tRNA pseudouridine synthase A.